The primary structure comprises 285 residues: Probable endonuclease 4 (285 aa).

Zn(2+) contacts are provided by H69, H109, E145, D179, H182, H216, D229, H231, and E261.

The protein belongs to the AP endonuclease 2 family. Requires Zn(2+) as cofactor.

The catalysed reaction is Endonucleolytic cleavage to 5'-phosphooligonucleotide end-products.. Its function is as follows. Endonuclease IV plays a role in DNA repair. It cleaves phosphodiester bonds at apurinic or apyrimidinic (AP) sites, generating a 3'-hydroxyl group and a 5'-terminal sugar phosphate. This Escherichia coli O81 (strain ED1a) protein is Probable endonuclease 4.